Consider the following 407-residue polypeptide: Argininosuccinate synthase (407 aa).

Residues 13-21 and A40 each bind ATP; that span reads AYSGGLDTS. The L-citrulline site is built by Y91 and S96. G121 contributes to the ATP binding site. Residues T123, N127, and D128 each coordinate L-aspartate. Position 127 (N127) interacts with L-citrulline. Positions 131, 182, 191, 267, and 279 each coordinate L-citrulline.

The protein belongs to the argininosuccinate synthase family. Type 1 subfamily. As to quaternary structure, homotetramer.

It is found in the cytoplasm. The catalysed reaction is L-citrulline + L-aspartate + ATP = 2-(N(omega)-L-arginino)succinate + AMP + diphosphate + H(+). It participates in amino-acid biosynthesis; L-arginine biosynthesis; L-arginine from L-ornithine and carbamoyl phosphate: step 2/3. The chain is Argininosuccinate synthase from Agrobacterium fabrum (strain C58 / ATCC 33970) (Agrobacterium tumefaciens (strain C58)).